The primary structure comprises 102 residues: Ferredoxin-thioredoxin reductase, catalytic chain (102 aa).

Cys53 lines the [4Fe-4S] cluster pocket. Catalysis depends on Cys55, which acts as the Nucleophile. An intrachain disulfide couples Cys55 to Cys85. Residues Cys72, Cys74, and Cys83 each contribute to the [4Fe-4S] cluster site.

The protein belongs to the ferredoxin thioredoxin reductase beta subunit family. In terms of assembly, heterodimer of subunit A (variable subunit) and subunit B (catalytic subunit). Heterodimeric FTR forms a complex with ferredoxin and thioredoxin. Requires [4Fe-4S] cluster as cofactor.

The protein localises to the plastid. It localises to the chloroplast. It carries out the reaction [thioredoxin]-disulfide + 2 reduced [2Fe-2S]-[ferredoxin] + 2 H(+) = [thioredoxin]-dithiol + 2 oxidized [2Fe-2S]-[ferredoxin]. Catalytic subunit of the ferredoxin-thioredoxin reductase (FTR), which catalyzes the two-electron reduction of thioredoxins by the electrons provided by reduced ferredoxin. This Guillardia theta (Cryptophyte) protein is Ferredoxin-thioredoxin reductase, catalytic chain (ftrB).